The sequence spans 283 residues: Protein/nucleic acid deglycase HchA (283 aa).

Residues His86, Glu91, and His123 each coordinate Zn(2+). Cys185 acts as the Nucleophile in catalysis.

It belongs to the peptidase C56 family. HchA subfamily. Homodimer.

The protein localises to the cytoplasm. It carries out the reaction N(omega)-(1-hydroxy-2-oxopropyl)-L-arginyl-[protein] + H2O = lactate + L-arginyl-[protein] + H(+). The enzyme catalyses N(6)-(1-hydroxy-2-oxopropyl)-L-lysyl-[protein] + H2O = lactate + L-lysyl-[protein] + H(+). The catalysed reaction is S-(1-hydroxy-2-oxopropyl)-L-cysteinyl-[protein] + H2O = lactate + L-cysteinyl-[protein] + H(+). It catalyses the reaction N(omega)-(1-hydroxy-2-oxoethyl)-L-arginyl-[protein] + H2O = L-arginyl-[protein] + glycolate + H(+). It carries out the reaction N(6)-(1-hydroxy-2-oxoethyl)-L-lysyl-[protein] + H2O = glycolate + L-lysyl-[protein] + H(+). The enzyme catalyses S-(1-hydroxy-2-oxoethyl)-L-cysteinyl-[protein] + H2O = glycolate + L-cysteinyl-[protein] + H(+). The catalysed reaction is N(2)-(1-hydroxy-2-oxopropyl)-dGTP + H2O = lactate + dGTP + H(+). It catalyses the reaction N(2)-(1-hydroxy-2-oxopropyl)-GTP + H2O = lactate + GTP + H(+). It carries out the reaction N(2)-(1-hydroxy-2-oxopropyl)-GDP + H2O = lactate + GDP + H(+). The enzyme catalyses N(2)-(1-hydroxy-2-oxopropyl)-GMP + H2O = lactate + GMP + H(+). The catalysed reaction is N(2)-(1-hydroxy-2-oxoethyl)-dGTP + H2O = dGTP + glycolate + H(+). It catalyses the reaction N(2)-(1-hydroxy-2-oxoethyl)-GTP + H2O = glycolate + GTP + H(+). It carries out the reaction N(2)-(1-hydroxy-2-oxoethyl)-GDP + H2O = glycolate + GDP + H(+). The enzyme catalyses N(2)-(1-hydroxy-2-oxoethyl)-GMP + H2O = glycolate + GMP + H(+). The catalysed reaction is an N(2)-(1-hydroxy-2-oxopropyl)-guanosine in RNA + H2O = a guanosine in RNA + lactate + H(+). It catalyses the reaction an N(2)-(1-hydroxy-2-oxopropyl)-2'-deoxyguanosine in DNA + H2O = a 2'-deoxyguanosine in DNA + lactate + H(+). It carries out the reaction an N(2)-(1-hydroxy-2-oxoethyl)-guanosine in RNA + H2O = a guanosine in RNA + glycolate + H(+). The enzyme catalyses an N(2)-(1-hydroxy-2-oxoethyl)-2'-deoxyguanosine in DNA + H2O = a 2'-deoxyguanosine in DNA + glycolate + H(+). Its function is as follows. Protein and nucleotide deglycase that catalyzes the deglycation of the Maillard adducts formed between amino groups of proteins or nucleotides and reactive carbonyl groups of glyoxals. Thus, functions as a protein deglycase that repairs methylglyoxal- and glyoxal-glycated proteins, and releases repaired proteins and lactate or glycolate, respectively. Deglycates cysteine, arginine and lysine residues in proteins, and thus reactivates these proteins by reversing glycation by glyoxals. Acts on early glycation intermediates (hemithioacetals and aminocarbinols), preventing the formation of Schiff bases and advanced glycation endproducts (AGE). Also functions as a nucleotide deglycase able to repair glycated guanine in the free nucleotide pool (GTP, GDP, GMP, dGTP) and in DNA and RNA. Is thus involved in a major nucleotide repair system named guanine glycation repair (GG repair), dedicated to reversing methylglyoxal and glyoxal damage via nucleotide sanitization and direct nucleic acid repair. Plays an important role in protecting cells from carbonyl stress. The polypeptide is Protein/nucleic acid deglycase HchA (Shigella flexneri).